Consider the following 559-residue polypeptide: Frizzled-1 (559 aa).

An N-terminal signal peptide occupies residues 1–35 (MKHSHLLQRCSAQLCTRGSSLILSLLLSVCLSVEG). Residues 36 to 239 (QYNGEKGISI…FAPEELNFAR (204 aa)) lie on the Extracellular side of the membrane. Residues 46–165 (PDHGYCQPIS…NGAGELCVGQ (120 aa)) form the FZ domain. Disulfide bonds link cysteine 51–cysteine 112, cysteine 59–cysteine 105, cysteine 96–cysteine 133, cysteine 122–cysteine 162, and cysteine 126–cysteine 150. Asparagine 65 is a glycosylation site (N-linked (GlcNAc...) asparagine). N-linked (GlcNAc...) asparagine glycosylation is present at asparagine 166. Residues 240–260 (IWIGIWSVLCCASTLFTVLTY) traverse the membrane as a helical segment. Residues 261–273 (LVDMKRFSYPERP) are Cytoplasmic-facing. The helical transmembrane segment at 274–294 (IIFLSGCYTMVAIAYIAGFLL) threads the bilayer. Topologically, residues 295–321 (EDKVVCNERFAEDGYKTVAQGTKKEGC) are extracellular. A helical transmembrane segment spans residues 322–342 (TFLFMMLYFFSMASSIWWVIL). Residues 343–364 (SLTWFLAAGMKWGHEAIEANSQ) lie on the Cytoplasmic side of the membrane. A helical transmembrane segment spans residues 365–385 (YFHLAAWAVPAIKTITILAVG). Over 386 to 408 (QVDGDTLSGVCFVGINNVDALRG) the chain is Extracellular. A helical transmembrane segment spans residues 409-429 (FVLAPLFVYLFIGTSFLLAGF). Topologically, residues 430 to 455 (VSLFRIRTIMKHDGTKTEKLEKLMVR) are cytoplasmic. A helical transmembrane segment spans residues 456-476 (IGIFSVLYTVPATIVIACYFY). The Extracellular portion of the chain corresponds to 477-513 (EQAFREQWEKSWISQSCKTYAIPCPSTGHPPMSPDFT). The helical transmembrane segment at 514 to 534 (VFMIKYLMTLIVGITSGFWIW) threads the bilayer. Residues 535-559 (SGKTLNSWRKFYTRLTNSKQGETTV) lie on the Cytoplasmic side of the membrane. A Lys-Thr-X-X-X-Trp motif, mediates interaction with the PDZ domain of Dvl family members motif is present at residues 537–542 (KTLNSW). Positions 557-559 (TTV) match the PDZ-binding motif.

This sequence belongs to the G-protein coupled receptor Fz/Smo family. Interacts with wnt8. As to expression, in the embryo, expressed in the heart, pronephros and otic vesicles.

The protein resides in the cell membrane. Its function is as follows. Receptor for Wnt proteins. Functions in the canonical Wnt/beta-catenin signaling pathway. The canonical Wnt/beta-catenin signaling pathway leads to the activation of disheveled proteins, inhibition of GSK-3 kinase, nuclear accumulation of beta-catenin and activation of Wnt target genes. A second signaling pathway involving PKC and calcium fluxes has been seen for some family members, but it is not yet clear if it represents a distinct pathway or if it can be integrated in the canonical pathway, as PKC seems to be required for Wnt-mediated inactivation of GSK-3 kinase. Both pathways seem to involve interactions with G-proteins. May be involved in transduction and intercellular transmission of polarity information during tissue morphogenesis and/or in differentiated tissues. The sequence is that of Frizzled-1 (fzd1) from Xenopus laevis (African clawed frog).